A 374-amino-acid chain; its full sequence is Chaperone protein DnaJ (374 aa).

The J domain occupies 4–68 (DYYEILGVSR…ETRNRYDRFG (65 aa)). The CR-type zinc finger occupies 133–215 (GGEKEIRIRH…CGGSGRRQET (83 aa)). Zn(2+) contacts are provided by Cys146, Cys149, Cys163, Cys166, Cys189, Cys192, Cys203, and Cys206. CXXCXGXG motif repeat units lie at residues 146–153 (CQTCKGSG), 163–170 (CTTCSGTG), 189–196 (CPTCDGAG), and 203–210 (CDVCGGSG).

It belongs to the DnaJ family. Homodimer. It depends on Zn(2+) as a cofactor.

The protein resides in the cytoplasm. Participates actively in the response to hyperosmotic and heat shock by preventing the aggregation of stress-denatured proteins and by disaggregating proteins, also in an autonomous, DnaK-independent fashion. Unfolded proteins bind initially to DnaJ; upon interaction with the DnaJ-bound protein, DnaK hydrolyzes its bound ATP, resulting in the formation of a stable complex. GrpE releases ADP from DnaK; ATP binding to DnaK triggers the release of the substrate protein, thus completing the reaction cycle. Several rounds of ATP-dependent interactions between DnaJ, DnaK and GrpE are required for fully efficient folding. Also involved, together with DnaK and GrpE, in the DNA replication of plasmids through activation of initiation proteins. The chain is Chaperone protein DnaJ from Microcystis aeruginosa (strain NIES-843 / IAM M-2473).